Here is a 371-residue protein sequence, read N- to C-terminus: dTDP-4-amino-4,6-dideoxy-D-glucose transaminase (371 aa).

At lysine 186 the chain carries N6-(pyridoxal phosphate)lysine.

It belongs to the DegT/DnrJ/EryC1 family. It depends on pyridoxal 5'-phosphate as a cofactor.

It carries out the reaction dTDP-4-amino-4,6-dideoxy-D-glucose + 2-oxoglutarate = dTDP-4-dehydro-6-deoxy-alpha-D-glucose + L-glutamate. It functions in the pathway bacterial outer membrane biogenesis; lipopolysaccharide biosynthesis. Its function is as follows. Catalyzes the conversion of dTDP-4-dehydro-6-deoxy-D-glucose (dTDP-D-Glc4O) to dTDP-4-amino-4,6-dideoxy-D-glucose (dTDP-D-Qui4N). This chain is dTDP-4-amino-4,6-dideoxy-D-glucose transaminase (vioA), found in Escherichia coli.